The chain runs to 89 residues: MNITLILFLIGILGFVLNRKNIILMLISIEIMLLAITFLILVSSLNMDDIIGQTYAIYIIVVAGAESAIGLAILVAFYRLRGSITIEYK.

3 helical membrane-spanning segments follow: residues 1–21, 22–42, and 57–77; these read MNIT…NRKN, IILM…LILV, and IYII…LVAF.

Belongs to the complex I subunit 4L family.

The protein localises to the mitochondrion membrane. The enzyme catalyses a ubiquinone + NADH + 5 H(+)(in) = a ubiquinol + NAD(+) + 4 H(+)(out). Its function is as follows. Core subunit of the mitochondrial membrane respiratory chain NADH dehydrogenase (Complex I) that is believed to belong to the minimal assembly required for catalysis. Complex I functions in the transfer of electrons from NADH to the respiratory chain. The immediate electron acceptor for the enzyme is believed to be ubiquinone. The polypeptide is NADH-ubiquinone oxidoreductase chain 4L (ndh-4L) (Neurospora crassa (strain ATCC 24698 / 74-OR23-1A / CBS 708.71 / DSM 1257 / FGSC 987)).